The sequence spans 372 residues: Glutamate 5-kinase (372 aa).

K14 contacts ATP. The substrate site is built by S54, D141, and N153. 173-174 (TD) contributes to the ATP binding site. One can recognise a PUA domain in the interval 280–358 (RGHVVIDAGA…GEIETVLGYM (79 aa)).

The protein belongs to the glutamate 5-kinase family.

The protein resides in the cytoplasm. It catalyses the reaction L-glutamate + ATP = L-glutamyl 5-phosphate + ADP. The protein operates within amino-acid biosynthesis; L-proline biosynthesis; L-glutamate 5-semialdehyde from L-glutamate: step 1/2. Functionally, catalyzes the transfer of a phosphate group to glutamate to form L-glutamate 5-phosphate. The sequence is that of Glutamate 5-kinase from Burkholderia vietnamiensis (strain G4 / LMG 22486) (Burkholderia cepacia (strain R1808)).